The following is an 88-amino-acid chain: Yop proteins translocation protein S (88 aa).

2 helical membrane passes run Trp15 to Val35 and Leu49 to Leu69.

The protein belongs to the FliQ/MopD/SpaQ family.

The protein resides in the cell membrane. Component of the Yop secretion machinery. The protein is Yop proteins translocation protein S (yscS) of Yersinia pestis.